We begin with the raw amino-acid sequence, 217 residues long: Protein DJ-1alpha (217 aa).

Residue C133 is the Nucleophile of the active site. Cysteine sulfinic acid (-SO2H); alternate is present on C133.

Expressed in testis (at protein level).

The protein resides in the cytoplasm. The protein localises to the nucleus. It is found in the mitochondrion. Its function is as follows. Plays an important role in cell protection against oxidative stress and cell death acting as oxidative stress sensor. Does not play a role in methylglyoxal detoxification. This is Protein DJ-1alpha from Drosophila melanogaster (Fruit fly).